Consider the following 337-residue polypeptide: Fructose-1,6-bisphosphatase class 1 (337 aa).

Mg(2+)-binding residues include Glu94, Asp116, Leu118, and Asp119. Residues 119-122, Asn210, and Lys276 each bind substrate; that span reads DGSS. Glu282 lines the Mg(2+) pocket.

This sequence belongs to the FBPase class 1 family. Homotetramer. Mg(2+) is required as a cofactor.

The protein resides in the cytoplasm. It catalyses the reaction beta-D-fructose 1,6-bisphosphate + H2O = beta-D-fructose 6-phosphate + phosphate. Its pathway is carbohydrate biosynthesis; gluconeogenesis. The polypeptide is Fructose-1,6-bisphosphatase class 1 (Burkholderia vietnamiensis (strain G4 / LMG 22486) (Burkholderia cepacia (strain R1808))).